The sequence spans 242 residues: N-alpha-acetyltransferase 60 (242 aa).

At 1 to 192 (MTEVVPSSAL…GGHPPWTILD (192 aa)) the chain is on the cytoplasmic side. Residues 13–182 (VSLRLLCHDD…DGFTYVLYIN (170 aa)) form the N-acetyltransferase domain. Position 38 (Tyr-38) interacts with substrate. At Lys-79 the chain carries N6-acetyllysine; by autocatalysis. Residue Tyr-97 is part of the active site. Substrate is bound at residue Leu-99. 101 to 103 (LGV) is an acetyl-CoA binding site. 3 positions are modified to N6-acetyllysine; by autocatalysis: Lys-105, Lys-109, and Lys-121. 109–114 (KHGIGS) serves as a coordination point for acetyl-CoA. Residue His-138 is part of the active site. Residues Asn-143 and 150 to 153 (YENR) contribute to the acetyl-CoA site. The tract at residues 162–173 (PYYYSIRGVLKD) is required for homodimerization. A substrate-binding site is contributed by Tyr-165. An intramembrane region (helical) is located at residues 193–236 (YIQHLGSALANLSPCSIPHRIYRQAHSLLCSFLPWSSISSKGGI). Residues 237-242 (EYSRTM) lie on the Cytoplasmic side of the membrane.

It belongs to the acetyltransferase family. NAA60 subfamily. As to quaternary structure, monomer and homodimer; monomer in presence of substrate and homodimer in its absence. Acetylated: autoacetylation is required for optimal acetyltransferase activity.

The protein localises to the golgi apparatus membrane. It catalyses the reaction N-terminal L-methionyl-[transmembrane protein] + acetyl-CoA = N-terminal N(alpha)-acetyl-L-methionyl-[transmembrane protein] + CoA + H(+). It carries out the reaction L-lysyl-[protein] + acetyl-CoA = N(6)-acetyl-L-lysyl-[protein] + CoA + H(+). N-alpha-acetyltransferase that specifically mediates the acetylation of N-terminal residues of the transmembrane proteins, with a strong preference for N-termini facing the cytosol. Displays N-terminal acetyltransferase activity towards a range of N-terminal sequences including those starting with Met-Lys, Met-Val, Met-Ala and Met-Met. Required for normal chromosomal segregation during anaphase. May also show histone acetyltransferase activity; such results are however unclear in vivo and would require additional experimental evidences. The chain is N-alpha-acetyltransferase 60 (Naa60) from Rattus norvegicus (Rat).